A 493-amino-acid chain; its full sequence is GPI alpha-1,6-mannosyltransferase 2 (493 aa).

Topologically, residues 1 to 13 (MWPQDPSRKEVLR) are cytoplasmic. A helical membrane pass occupies residues 14 to 34 (FAVSCRILTLMLQALFNAIIP). The Lumenal portion of the chain corresponds to 35 to 77 (DHHAEAFSPPRLAPSGFVDQLVEGLLGGLSHWDAEHFLFIAEH). A helical membrane pass occupies residues 78-98 (GYLYEHNFAFFPGFPLALLVG). Topologically, residues 99–113 (TELLRPLRGLLSLRS) are cytoplasmic. A helical membrane pass occupies residues 114-134 (CLLISVASLNFLFFMLAAVAL). At 135-136 (HD) the chain is on the lumenal side. A helical transmembrane segment spans residues 137 to 157 (LGCLVLHCPHQSFYAALLFCL). At 158–161 (SPAN) the chain is on the cytoplasmic side. Residues 162–182 (VFLAAGYSEALFALLTFSAMG) traverse the membrane as a helical segment. Residues 183–192 (QLERGRVWTS) lie on the Lumenal side of the membrane. A helical transmembrane segment spans residues 193 to 213 (VLLFAFATGVRSNGLVSVGFL). Residues 214–234 (MHSQCQGFFSSLTMLNPLRQL) lie on the Cytoplasmic side of the membrane. A helical transmembrane segment spans residues 235–255 (FKLMASLFLSVFTLGLPFALF). Residues 256-327 (QYYAYTQFCL…KYYELKQVPN (72 aa)) lie on the Lumenal side of the membrane. Residues 328–348 (FLLAAPVAILVAWATWTYVTT) form a helical membrane-spanning segment. At 349 to 378 (HPWLCLTLGLQRSKNNKTLEKPDLGFLSPQ) the chain is on the cytoplasmic side. The chain crosses the membrane as a helical span at residues 379 to 399 (VFVYVVHAAVLLLFGGLCMHV). Topologically, residues 400-469 (QVLTRFLGSS…HWKTCSPVTR (70 aa)) are lumenal. The chain crosses the membrane as a helical span at residues 470 to 490 (YILGYFLTYWLLGLLLHCNFL). Over 491 to 493 (PWT) the chain is Cytoplasmic.

Belongs to the PIGV family. In terms of processing, not N-glycosylated.

It is found in the endoplasmic reticulum membrane. It functions in the pathway glycolipid biosynthesis; glycosylphosphatidylinositol-anchor biosynthesis. Its function is as follows. Alpha-1,6-mannosyltransferase that catalyzes the transfer of the second mannose, via an alpha-1,6 bond, from a dolichol-phosphate-mannose (Dol-P-Man) to the alpha-D-Man-(1-&gt;4)-alpha-D-GlcN-(1-&gt;6)-(1-radyl,2-acyl-sn-glycero-3-phospho)-2-acyl-inositol (also termed H2) intermediate to generate an alpha-D-Man-(1-&gt;6)-alpha-D-Man-(1-&gt;4)-alpha-D-GlcN-(1-&gt;6)-(1-radyl,2-acyl-sn-glycero-3-phospho)-2-acyl-inositol (also termed H3) and participates in the seventh step of the glycosylphosphatidylinositol-anchor biosynthesis. Also transfers the second mannose on a 2-PEtn-alpha-D-Man-(1-&gt;4)-alpha-D-GlcN-(1-&gt;6)-(1-radyl,2-acyl-sn-glycero-3-phospho)-2-acyl-inositol (also termed H5). This chain is GPI alpha-1,6-mannosyltransferase 2, found in Homo sapiens (Human).